Reading from the N-terminus, the 290-residue chain is HTH-type transcriptional regulator BsdA (290 aa).

In terms of domain architecture, HTH lysR-type spans 1–59; that stretch reads MDIRQLRYFITIAQEQKITSAAKKLHMAQPPLSRQLKQLEDELGVVLFDRNKKKQMTLT. Positions 18–37 form a DNA-binding region, H-T-H motif; sequence ITSAAKKLHMAQPPLSRQLK.

Belongs to the LysR transcriptional regulatory family.

Could be a positive regulator of bsdBCD expression in response to salicylic acid. The sequence is that of HTH-type transcriptional regulator BsdA (bsdA) from Bacillus subtilis (strain 168).